The following is a 556-amino-acid chain: Inositol 1,4,5-trisphosphate receptor-interacting protein (556 aa).

A signal peptide spans 1–15 (MALGLFRVCLVVVTA). The Extracellular portion of the chain corresponds to 16-88 (IINHPLLFPR…EGQQQNESRT (73 aa)). Asn-27 and Asn-84 each carry an N-linked (GlcNAc...) asparagine glycan. Residues 32–87 (ENEEEIIRQMQAHQEKLQLEQLRLEEEMARLAADKEAEKEALERVAEEGQQQNESR) adopt a coiled-coil conformation. A helical transmembrane segment spans residues 89–107 (AWDLWSTLCMILFLVIEVW). Topologically, residues 108–556 (RQDHQDAPSP…ASLPPKTVIL (449 aa)) are cytoplasmic.

This sequence belongs to the ITPRIP family. Interacts with ITPR.

The protein localises to the cell membrane. It is found in the nucleus outer membrane. Functionally, enhances Ca(2+)-mediated inhibition of inositol 1,4,5-triphosphate receptor (ITPR) Ca(2+) release. This Bos taurus (Bovine) protein is Inositol 1,4,5-trisphosphate receptor-interacting protein (ITPRIP).